Here is a 129-residue protein sequence, read N- to C-terminus: Glycine cleavage system H protein (129 aa).

One can recognise a Lipoyl-binding domain in the interval 24-106 (TYTVGITEHA…YAGGWIFKIK (83 aa)). Lys65 bears the N6-lipoyllysine mark.

This sequence belongs to the GcvH family. The glycine cleavage system is composed of four proteins: P, T, L and H. The cofactor is (R)-lipoate.

Its function is as follows. The glycine cleavage system catalyzes the degradation of glycine. The H protein shuttles the methylamine group of glycine from the P protein to the T protein. The chain is Glycine cleavage system H protein from Citrobacter koseri (strain ATCC BAA-895 / CDC 4225-83 / SGSC4696).